A 164-amino-acid polypeptide reads, in one-letter code: Large ribosomal subunit protein eL24 (164 aa).

2 disordered regions span residues 63–82 (KDAA…KPYS) and 117–164 (ERIK…GGKA). Positions 71 to 81 (KKRRRATKKPY) are enriched in basic residues. The segment covering 117 to 133 (ERIKKTKDEKKAKKAEV) has biased composition (basic and acidic residues).

This sequence belongs to the eukaryotic ribosomal protein eL24 family.

It is found in the cytoplasm. The sequence is that of Large ribosomal subunit protein eL24 (RPL24) from Cicer arietinum (Chickpea).